A 1239-amino-acid chain; its full sequence is GRB10-interacting GYF protein 2 (1239 aa).

2 disordered regions span residues 105-184 and 206-409; these read TNRG…GVRG and DERG…IVPA. Residues 153 to 181 are compositionally biased toward basic and acidic residues; sequence GAREMHRSQSWEERGDRRFEKPARKEPDG. Acidic residues predominate over residues 231-240; sequence CLDDAEDETG. Polar residues predominate over residues 241 to 252; that stretch reads TFDSSGAFLSSK. Basic and acidic residues-rich tracts occupy residues 257–272 and 318–331; these read VQKEPIPEEQEIDFHP and PDHKTSSPVRRTDM. Residues 488–536 enclose the GYF domain; sequence QQKWYYKDPQGEIQGPFSNREMAEWYQAGYFPMTLLLRRVCDETFQPLG. A compositionally biased stretch (basic and acidic residues) spans 678–737; that stretch reads DKVKAAKMEQERREAELRAKQEEEEQHRRKEAEEERKRREEEELARRKQEEALQRQKELA. Disordered regions lie at residues 678 to 749, 763 to 812, 843 to 960, and 1057 to 1085; these read DKVK…ERQR, EEER…RQLE, AEEE…KPTG, and APRNATSKNKNNASKSAGSNSRQSKKVEQ. Positions 843–862 are enriched in basic and acidic residues; the sequence is AEEEERNKREEAQRQKELQR. Residues 863–885 are compositionally biased toward low complexity; sequence QRQQQQEALRRLQLQQQQQQLAQ. Residues 888-900 are compositionally biased toward polar residues; sequence LPSSSTWGQQVTP. Positions 901–913 are enriched in low complexity; it reads SAASQSALSLAEI. Positions 914-933 are enriched in basic and acidic residues; it reads QKLEEERERQKLQEQRHQQQ. 2 stretches are compositionally biased toward low complexity: residues 934 to 948 and 1060 to 1077; these read ELKALQQQQQQQQQK and NATSKNKNNASKSAGSNS.

It belongs to the GIGYF family. In terms of assembly, component of the 4EHP-GYF2 complex.

Its function is as follows. Key component of the 4EHP-GYF2 complex, a multiprotein complex that acts as a repressor of translation initiation. In association with EIF4E2, assists ribosome-associated quality control (RQC) by sequestering the mRNA cap, blocking ribosome initiation and decreasing the translational load on problematic messages. This chain is GRB10-interacting GYF protein 2 (gigyf2), found in Xenopus laevis (African clawed frog).